The following is a 295-amino-acid chain: Nucleotide-binding protein Lxx11490 (295 aa).

19 to 26 (GMSGAGRS) contacts ATP. 70 to 73 (DVRG) serves as a coordination point for GTP.

The protein belongs to the RapZ-like family.

Functionally, displays ATPase and GTPase activities. This chain is Nucleotide-binding protein Lxx11490, found in Leifsonia xyli subsp. xyli (strain CTCB07).